Here is a 667-residue protein sequence, read N- to C-terminus: Acetolactate synthase 1, chloroplastic (667 aa).

Low complexity predominate over residues 1–35; it reads MAAAAPSPSSSAFSKTLSPSSSTSSTLLPRSTFPF. A disordered region spans residues 1-45; it reads MAAAAPSPSSSAFSKTLSPSSSTSSTLLPRSTFPFPHHPHKTTPP. The N-terminal 94 residues, 1–94, are a transit peptide targeting the chloroplast; that stretch reads MAAAAPSPSS…VSRFAPDEPR (94 aa). E141 lines the thiamine diphosphate pocket. C161 and C307 are disulfide-bonded. FAD contacts are provided by residues R243, 349–370, and 392–411; these read HGTVYANYAVDSSDLLLAFGVR and DIDSAEIGKNKQPHVSICAD. Positions 484 to 564 are thiamine pyrophosphate binding; the sequence is QHQMWAAQYY…VKIMLLNNQH (81 aa). Mg(2+) contacts are provided by D535 and N562.

This sequence belongs to the TPP enzyme family. Requires Mg(2+) as cofactor. Thiamine diphosphate serves as cofactor.

Its subcellular location is the plastid. It is found in the chloroplast. It catalyses the reaction 2 pyruvate + H(+) = (2S)-2-acetolactate + CO2. It participates in amino-acid biosynthesis; L-isoleucine biosynthesis; L-isoleucine from 2-oxobutanoate: step 1/4. The protein operates within amino-acid biosynthesis; L-valine biosynthesis; L-valine from pyruvate: step 1/4. This is Acetolactate synthase 1, chloroplastic (ALS SURA) from Nicotiana tabacum (Common tobacco).